Reading from the N-terminus, the 292-residue chain is Universal stress protein Mb2346c (292 aa).

The protein belongs to the universal stress protein A family.

In Mycobacterium bovis (strain ATCC BAA-935 / AF2122/97), this protein is Universal stress protein Mb2346c.